The following is a 400-amino-acid chain: Aminomethyltransferase, mitochondrial (400 aa).

Substrate contacts are provided by E221, R250, and Y397.

The protein belongs to the GcvT family. In terms of assembly, component of the glycine decarboxylase complex (GDC), which is composed of four proteins: P, T, L and H.

It is found in the mitochondrion. It carries out the reaction N(6)-[(R)-S(8)-aminomethyldihydrolipoyl]-L-lysyl-[protein] + (6S)-5,6,7,8-tetrahydrofolate = N(6)-[(R)-dihydrolipoyl]-L-lysyl-[protein] + (6R)-5,10-methylene-5,6,7,8-tetrahydrofolate + NH4(+). In terms of biological role, the glycine cleavage system (glycine decarboxylase complex) catalyzes the degradation of glycine. This chain is Aminomethyltransferase, mitochondrial (GCV1), found in Saccharomyces cerevisiae (strain ATCC 204508 / S288c) (Baker's yeast).